Here is a 305-residue protein sequence, read N- to C-terminus: Large ribosomal subunit protein uL2m (305 aa).

The transit peptide at 1–60 (MALCALTRALRSLNLAPPTVAAPAPSLFPAAQMMNNGLLQQPSALMLLPCRPVLTSVALN) directs the protein to the mitochondrion. Residues 264 to 283 (RWLGKRPNSGRWHRKGGWAG) form a disordered region. Residues 274–283 (RWHRKGGWAG) show a composition bias toward basic residues.

Belongs to the universal ribosomal protein uL2 family. As to quaternary structure, component of the mitochondrial large ribosomal subunit (mt-LSU). Mature mammalian 55S mitochondrial ribosomes consist of a small (28S) and a large (39S) subunit. The 28S small subunit contains a 12S ribosomal RNA (12S mt-rRNA) and 30 different proteins. The 39S large subunit contains a 16S rRNA (16S mt-rRNA), a copy of mitochondrial valine transfer RNA (mt-tRNA(Val)), which plays an integral structural role, and 52 different proteins.

It localises to the mitochondrion. This Homo sapiens (Human) protein is Large ribosomal subunit protein uL2m (MRPL2).